We begin with the raw amino-acid sequence, 122 residues long: Large ribosomal subunit protein uL14 (122 aa).

The protein belongs to the universal ribosomal protein uL14 family. As to quaternary structure, part of the 50S ribosomal subunit. Forms a cluster with proteins L3 and L19. In the 70S ribosome, L14 and L19 interact and together make contacts with the 16S rRNA in bridges B5 and B8.

In terms of biological role, binds to 23S rRNA. Forms part of two intersubunit bridges in the 70S ribosome. This chain is Large ribosomal subunit protein uL14, found in Exiguobacterium sp. (strain ATCC BAA-1283 / AT1b).